The following is a 231-amino-acid chain: 26S proteasome non-ATPase regulatory subunit 10 (231 aa).

ANK repeat units lie at residues 3–36 (GCVSNLMVCNLAYNGKLDELKESILADKSLATRT), 37–69 (DQDSRTALHWACSAGHTEIVEFLLQLGVPVNEK), 70–102 (DDAGWSPLHIAASAGRDEIVKALLIKGAQVNAV), 103–135 (NQNGCTALHYAASKNRHEIAVMLLEGGANPDAK), 136–168 (NHYDATAMHRAAAKGNLKMVHILLFYKASTNIQ), 169–201 (DTEGNTPLHLACDEERVEEAKLLVTQGASIYIE), and 202–226 (NKEEKTPLQVAKGGLGLILKRIAES).

Part of transient complex containing PSMD10, PSMC4, PSMC5 and PAAF1 formed during the assembly of the 26S proteasome. Stays associated throughout the assembly of the PA700/19S RC and is released upon association with the 20S core. Interacts with PSMC4. Interacts with RB1. Interacts with CDK4. Interacts with MDM2. Interacts with RELA. Associates with a CDK4:CCND2 serine/threonine kinase complex. Interacts with ARHGDIA and increases the interaction between ARHGDIA and RHOA, hence promotes ARHGDIA inactivation of RHOA and ROCK.

The protein resides in the cytoplasm. The protein localises to the nucleus. Functionally, acts as a chaperone during the assembly of the 26S proteasome, specifically of the PA700/19S regulatory complex (RC). In the initial step of the base subcomplex assembly is part of an intermediate PSMD10:PSMC4:PSMC5:PAAF1 module which probably assembles with a PSMD5:PSMC2:PSMC1:PSMD2 module. Independently of the proteasome, regulates EGF-induced AKT activation through inhibition of the RHOA/ROCK/PTEN pathway, leading to prolonged AKT activation. Plays an important role in RAS-induced tumorigenesis. Acts as an oncoprotein by being involved in negative regulation of tumor suppressors RB1 and p53/TP53. Overexpression is leading to phosphorylation of RB1 and proteasomal degradation of RB1. Regulates CDK4-mediated phosphorylation of RB1 by competing with CDKN2A for binding with CDK4. Facilitates binding of MDM2 to p53/TP53 and the mono- and polyubiquitination of p53/TP53 by MDM2 suggesting a function in targeting the TP53:MDM2 complex to the 26S proteasome. Involved in p53-independent apoptosis. Involved in regulation of NF-kappa-B by retaining it in the cytoplasm. Binds to the NF-kappa-B component RELA and accelerates its XPO1/CRM1-mediated nuclear export. In Rattus norvegicus (Rat), this protein is 26S proteasome non-ATPase regulatory subunit 10 (Psmd10).